The primary structure comprises 466 residues: Tyrosinase HcTyr1 (466 aa).

Cu cation-binding residues include H43, H78, H87, H211, H215, and H238.

This sequence belongs to the tyrosinase family. Monomer. Formation of a dimer is observed when the protein is in its holo-form. Cu(2+) serves as cofactor. In terms of processing, in vitro, the C-terminal lid-domain is slowly cleaved off in an autoprocessive time dependent manner, leading to the formation of cleaved-HcTyr1. The processing rate is not influenced by factors such as pH and added metal ions.

The enzyme catalyses L-tyrosine + O2 = L-dopaquinone + H2O. It carries out the reaction 2 L-tyrosine + O2 = 2 L-dopa. It catalyses the reaction 2 L-dopa + O2 = 2 L-dopaquinone + 2 H2O. With respect to regulation, cleavage of the lid-domain increases activity levels, affinity for substrate and turnover rate. Exhibits high saline tolerance. Functionally, copper-containing oxidase that catalyzes the conversion of L-tyrosine to L-dopa and then to L-dopaquinone. Can use various phenols such as p-coumaric acid, phenol, pyrocatechol, syringol or pyrogallol. Accepts several of the constituents of lignin and potentially participates in lignin functionalization. The protein is Tyrosinase HcTyr1 of Hahella sp. (strain CCB-MM4).